The chain runs to 153 residues: uncharacterized protein (153 aa).

The signal sequence occupies residues 1–19 (MRKYIPLVLFIFSWPVLCA). Active-site residues include arginine 46, glutamate 54, and arginine 88.

Belongs to the thermonuclease family.

This is an uncharacterized protein from Escherichia coli O157:H7.